Consider the following 73-residue polypeptide: Translational regulator CsrA (73 aa).

This sequence belongs to the CsrA/RsmA family. Homodimer; the beta-strands of each monomer intercalate to form a hydrophobic core, while the alpha-helices form wings that extend away from the core.

The protein resides in the cytoplasm. In terms of biological role, a translational regulator that binds mRNA to regulate translation initiation and/or mRNA stability. Usually binds in the 5'-UTR at or near the Shine-Dalgarno sequence preventing ribosome-binding, thus repressing translation. Its main target seems to be the major flagellin gene, while its function is anatagonized by FliW. The protein is Translational regulator CsrA of Clostridium kluyveri (strain NBRC 12016).